Here is a 297-residue protein sequence, read N- to C-terminus: Adrenocorticotropic hormone receptor (297 aa).

The Extracellular segment spans residues 1–23; sequence MKHIINSYENINNTARNNSDCPR. Asn12 and Asn17 each carry an N-linked (GlcNAc...) asparagine glycan. Intrachain disulfides connect Cys21–Cys253 and Cys245–Cys251. The chain crosses the membrane as a helical span at residues 24 to 49; the sequence is VVLPEEIFFTISIVGVLENLIVLLAV. The Cytoplasmic portion of the chain corresponds to 50 to 58; it reads FKNKNLQAP. Residues 59–79 traverse the membrane as a helical segment; the sequence is MYFFICSLAISDMLGSLYKIL. At 80-104 the chain is on the extracellular side; the sequence is ENILIILRNMGYLKPRGSFETTADD. A helical transmembrane segment spans residues 105–126; it reads IIDSLFVLSLLGSIFSLSVIAA. Over 127–147 the chain is Cytoplasmic; the sequence is DRYITIFHALRYHSIVTMRRT. The helical transmembrane segment at 148–168 threads the bilayer; the sequence is VVVLTVIWTFCTGTGITMVIF. Residues 169–180 lie on the Extracellular side of the membrane; that stretch reads SHHVPTVITFTS. The chain crosses the membrane as a helical span at residues 181-199; sequence LFPLMLVFILCLYVHMFLL. At 200 to 217 the chain is on the cytoplasmic side; it reads ARSHTRKISTLPRANMKG. A helical membrane pass occupies residues 218-244; the sequence is AITLTILLGVFIFCWAPFVLHVLLMTF. At 245 to 256 the chain is on the extracellular side; that stretch reads CPSNPYCACYMS. Residues 257 to 278 traverse the membrane as a helical segment; sequence LFQVNGMLIMCNAVIDPFIYAF. Over 279–297 the chain is Cytoplasmic; it reads RSPELRDAFKKMIFCSRYW. Residue Cys293 is the site of S-palmitoyl cysteine attachment.

The protein belongs to the G-protein coupled receptor 1 family. Homodimer. Interacts with corticotropin (ACTH). Interacts with MRAP; this interaction targets MC2R to the plasma membrane. Interacts with MRAP2; competing with MRAP for binding to MC2R and impairing the binding of corticotropin (ACTH). Post-translationally, ubiquitinated by MGRN1 that may be involved in post-endocytic trafficking and/or degradation of internalized receptor. As to expression, melanocytes and corticoadrenal tissue.

The protein localises to the cell membrane. Hormone receptor primarily expressed in adrenal cortex that plays a key role in regulating adrenocortical function. Upon corticotropin (ACTH) binding, facilitates the release of adrenal glucocorticoids, including cortisol and corticosterone. In addition, MC2R is required for fetal and neonatal adrenal gland development. Mechanistically, activates adenylate cyclase (cAMP), the MAPK cascade as well as the cAMP-dependent protein kinase A pathway leading to steroidogenic factor 1/NR5A1-mediated transcriptional activation. This Homo sapiens (Human) protein is Adrenocorticotropic hormone receptor (MC2R).